Reading from the N-terminus, the 268-residue chain is Nickel import ATP-binding protein NikE (268 aa).

The region spanning 4 to 252 (LNVSDLSHHY…SSDAGRVLQN (249 aa)) is the ABC transporter domain. 45–52 (GRSGCGKS) contacts ATP.

This sequence belongs to the ABC transporter superfamily. Nickel importer (TC 3.A.1.5.3) family. As to quaternary structure, the complex is composed of two ATP-binding proteins (NikD and NikE), two transmembrane proteins (NikB and NikC) and a solute-binding protein (NikA).

Its subcellular location is the cell inner membrane. The enzyme catalyses Ni(2+)(out) + ATP + H2O = Ni(2+)(in) + ADP + phosphate + H(+). Part of the ABC transporter complex NikABCDE involved in nickel import. Responsible for energy coupling to the transport system. In Escherichia coli O157:H7, this protein is Nickel import ATP-binding protein NikE.